We begin with the raw amino-acid sequence, 201 residues long: Transcription factor MYB82 (201 aa).

HTH myb-type domains follow at residues 9 to 61 (KSYV…KNYL) and 62 to 116 (RPNI…NKKP). DNA-binding regions (H-T-H motif) lie at residues 37–61 (WADISRRSGLKRGGKSCRLRWKNYL) and 89–112 (WSLIAGRLPGRTDNEVKNYWNTHL). The segment at 112 to 133 (LNKKPNSRRQNAPESIVGATPF) is disordered.

In terms of assembly, homodimer and heterodimer with GL1. Part of the WD40-bHLH-MYB complex. Interacts with BHLH012/MYC1 and BHLH042/TT8. Interacts (via N-terminus) with GL1 and GL3. Mainly expressed in the trichomes of new leaves.

Its subcellular location is the nucleus. Functionally, transcription activation factor positively regulating trichomes development. Has a function nearly equivalent to that of GL1 and can complement gl1 mutants. The sequence is that of Transcription factor MYB82 (MYB82) from Arabidopsis thaliana (Mouse-ear cress).